A 22-amino-acid polypeptide reads, in one-letter code: Major outer membrane protein (22 aa).

This sequence belongs to the Gram-negative porin family. Disulfide bond interactions within and between MOMP molecules and other components form high molecular-weight oligomers.

The protein resides in the cell outer membrane. Its function is as follows. Structural rigidity of the outer membrane of elementary bodies and porin forming, permitting diffusion of solutes through the intracellular reticulate body membrane. This chain is Major outer membrane protein (ompH), found in Avibacterium gallinarum (Pasteurella gallinarum).